Consider the following 93-residue polypeptide: Small ribosomal subunit protein uS19 (93 aa).

The protein belongs to the universal ribosomal protein uS19 family.

In terms of biological role, protein S19 forms a complex with S13 that binds strongly to the 16S ribosomal RNA. The sequence is that of Small ribosomal subunit protein uS19 from Agathobacter rectalis (strain ATCC 33656 / DSM 3377 / JCM 17463 / KCTC 5835 / VPI 0990) (Eubacterium rectale).